A 260-amino-acid polypeptide reads, in one-letter code: Proteasome subunit alpha (260 aa).

Positions 231 to 260 (LLPEDFSPGQTEGGGDPAPESGDSKDAKDN) are disordered.

This sequence belongs to the peptidase T1A family. As to quaternary structure, the 20S proteasome core is composed of 14 alpha and 14 beta subunits that assemble into four stacked heptameric rings, resulting in a barrel-shaped structure. The two inner rings, each composed of seven catalytic beta subunits, are sandwiched by two outer rings, each composed of seven alpha subunits. The catalytic chamber with the active sites is on the inside of the barrel. Has a gated structure, the ends of the cylinder being occluded by the N-termini of the alpha-subunits. Is capped by the proteasome-associated ATPase, ARC.

The protein resides in the cytoplasm. It participates in protein degradation; proteasomal Pup-dependent pathway. The formation of the proteasomal ATPase ARC-20S proteasome complex, likely via the docking of the C-termini of ARC into the intersubunit pockets in the alpha-rings, may trigger opening of the gate for substrate entry. Interconversion between the open-gate and close-gate conformations leads to a dynamic regulation of the 20S proteasome proteolysis activity. Functionally, component of the proteasome core, a large protease complex with broad specificity involved in protein degradation. The sequence is that of Proteasome subunit alpha from Mycobacteroides abscessus (strain ATCC 19977 / DSM 44196 / CCUG 20993 / CIP 104536 / JCM 13569 / NCTC 13031 / TMC 1543 / L948) (Mycobacterium abscessus).